A 351-amino-acid chain; its full sequence is Trans-enoyl reductase grgB (351 aa).

An Enoyl reductase (ER) domain is found at 10 to 346 (GAESGGYRLA…GKVHAKKLVV (337 aa)). NADP(+) is bound by residues 161–164 (ATAT), 184–187 (SPAN), Tyr-202, 249–250 (LE), and 339–340 (VH).

It belongs to the zinc-containing alcohol dehydrogenase family.

Its pathway is secondary metabolite biosynthesis. Its function is as follows. Trans-enoyl reductase; part of the gene cluster that mediates the biosynthesis of gregatin A, a fungal polyketide featuring an alkylated furanone core. The PKS grgA synthesizes C11 and C4 polyketide chains in the presence and absence of the trans-enoyl reductase grgB, respectively. The polyketide transferase grgF is then responsible for the fusion of the two carbon chains to produce the furanone skeleton of gregatin A. Next, the cytochrome P450 monooxygenase grgG accepts performs the oxidative cyclization to furnish the gregatin scaffold and leads to the formation of desmethylgregatin A. Finally, the O-methyltransferase grgD methylates the carboxyl group of desmethylgregatin A to provide gregatin A. This Penicillium sp protein is Trans-enoyl reductase grgB.